Here is a 445-residue protein sequence, read N- to C-terminus: Acetylcholine-gated chloride channel subunit acc-2 (445 aa).

The signal sequence occupies residues methionine 1–serine 26. Over alanine 27–arginine 258 the chain is Extracellular. 4 N-linked (GlcNAc...) asparagine glycosylation sites follow: asparagine 46, asparagine 59, asparagine 121, and asparagine 162. A disulfide bridge connects residues cysteine 177 and cysteine 191. N-linked (GlcNAc...) asparagine glycosylation occurs at asparagine 218. A helical transmembrane segment spans residues phenylalanine 259–isoleucine 279. Residues serine 280 to arginine 286 are Cytoplasmic-facing. The chain crosses the membrane as a helical span at residues alanine 287–glycine 307. Topologically, residues asparagine 308–methionine 326 are extracellular. Residues leucine 327–valine 347 traverse the membrane as a helical segment. At arginine 348–serine 407 the chain is on the cytoplasmic side. A helical membrane pass occupies residues isoleucine 408–tyrosine 428. Residues isoleucine 429 to glycine 445 are Extracellular-facing.

The protein belongs to the ligand-gated ion channel (TC 1.A.9) family. As to quaternary structure, homopentamer (in vitro). May interact with either acc-3 or acc-4; the interactions do not result in significant heteropentameric ion channel activity. Expressed in RIA, RIG, PHA and AIZ glutamatergic neurons, URX and RIH cholinergic neurons, and in male-specific MCM neurons.

The protein resides in the cell membrane. In terms of biological role, acetylcholine-gated chloride channel subunit. Currents in channels are triggered in response to acetylcholine. Channel properties may be modulated by the formation of homomeric and heteromeric channels. In Caenorhabditis elegans, this protein is Acetylcholine-gated chloride channel subunit acc-2.